Consider the following 117-residue polypeptide: Large ribosomal subunit protein bL20 (117 aa).

Belongs to the bacterial ribosomal protein bL20 family.

In terms of biological role, binds directly to 23S ribosomal RNA and is necessary for the in vitro assembly process of the 50S ribosomal subunit. It is not involved in the protein synthesizing functions of that subunit. This is Large ribosomal subunit protein bL20 from Actinobacillus pleuropneumoniae serotype 7 (strain AP76).